Here is a 354-residue protein sequence, read N- to C-terminus: MMNKNKKLMVMAGGTGGHVFPGLAVAKQLQQQGWQIRWLGTADRMEAELVPKHGIEIDFIQVKGLRGQGLMRLLKAPFQIVNAILQARRHLLTYQPDAVLGMGGYVSGPGGIAAWLLGIPVVLHEQNAVAGLTNQWLAKIARRVFQAFPGAFADASVVGNPVRQDVVQLAAPEQRFATRNGAIRILVMGGSQGARILNQTLPAVMAALGEGYEIRHQAGKNSQQDVAEAYAAAGVESAQVTEFIDDVADAYAWADLLICRSGALTVSEVSAAGVGAIFIPFMHKDRQQALNADHLVACGAAKMIEQPELSVEKLTQMVRELDRAQLLSMAQKARQAAKLDADKVVAQAIIAITE.

UDP-N-acetyl-alpha-D-glucosamine is bound by residues 15 to 17, N127, R163, S191, I244, 263 to 268, and Q288; these read TGG and ALTVSE.

The protein belongs to the glycosyltransferase 28 family. MurG subfamily.

The protein resides in the cell inner membrane. It carries out the reaction di-trans,octa-cis-undecaprenyl diphospho-N-acetyl-alpha-D-muramoyl-L-alanyl-D-glutamyl-meso-2,6-diaminopimeloyl-D-alanyl-D-alanine + UDP-N-acetyl-alpha-D-glucosamine = di-trans,octa-cis-undecaprenyl diphospho-[N-acetyl-alpha-D-glucosaminyl-(1-&gt;4)]-N-acetyl-alpha-D-muramoyl-L-alanyl-D-glutamyl-meso-2,6-diaminopimeloyl-D-alanyl-D-alanine + UDP + H(+). The protein operates within cell wall biogenesis; peptidoglycan biosynthesis. Its function is as follows. Cell wall formation. Catalyzes the transfer of a GlcNAc subunit on undecaprenyl-pyrophosphoryl-MurNAc-pentapeptide (lipid intermediate I) to form undecaprenyl-pyrophosphoryl-MurNAc-(pentapeptide)GlcNAc (lipid intermediate II). The polypeptide is UDP-N-acetylglucosamine--N-acetylmuramyl-(pentapeptide) pyrophosphoryl-undecaprenol N-acetylglucosamine transferase (Vibrio cholerae serotype O1 (strain ATCC 39315 / El Tor Inaba N16961)).